The primary structure comprises 31 residues: Cytochrome b6-f complex subunit 6 (31 aa).

Residues 4 to 24 traverse the membrane as a helical segment; sequence VVSYLGILAAFALVTIGIFLV.

It belongs to the PetL family. As to quaternary structure, the 4 large subunits of the cytochrome b6-f complex are cytochrome b6, subunit IV (17 kDa polypeptide, PetD), cytochrome f and the Rieske protein, while the 4 small subunits are PetG, PetL, PetM and PetN. The complex functions as a dimer.

The protein resides in the plastid. It is found in the chloroplast thylakoid membrane. Its function is as follows. Component of the cytochrome b6-f complex, which mediates electron transfer between photosystem II (PSII) and photosystem I (PSI), cyclic electron flow around PSI, and state transitions. PetL is important for photoautotrophic growth as well as for electron transfer efficiency and stability of the cytochrome b6-f complex. This Mesostigma viride (Green alga) protein is Cytochrome b6-f complex subunit 6.